The following is a 225-amino-acid chain: 3-dehydroquinate dehydratase (225 aa).

3-dehydroquinate is bound by residues 30-32 (EWR) and arginine 62. Histidine 118 acts as the Proton donor/acceptor in catalysis. The Schiff-base intermediate with substrate role is filled by lysine 143. The 3-dehydroquinate site is built by arginine 186, serine 205, and glutamine 209.

The protein belongs to the type-I 3-dehydroquinase family. In terms of assembly, homodimer.

The catalysed reaction is 3-dehydroquinate = 3-dehydroshikimate + H2O. It functions in the pathway metabolic intermediate biosynthesis; chorismate biosynthesis; chorismate from D-erythrose 4-phosphate and phosphoenolpyruvate: step 3/7. Involved in the third step of the chorismate pathway, which leads to the biosynthesis of aromatic amino acids. Catalyzes the cis-dehydration of 3-dehydroquinate (DHQ) and introduces the first double bond of the aromatic ring to yield 3-dehydroshikimate. The protein is 3-dehydroquinate dehydratase of Streptococcus thermophilus (strain ATCC BAA-491 / LMD-9).